We begin with the raw amino-acid sequence, 158 residues long: Endoribonuclease YbeY (158 aa).

Residues His-114, His-118, and His-124 each contribute to the Zn(2+) site.

It belongs to the endoribonuclease YbeY family. It depends on Zn(2+) as a cofactor.

The protein resides in the cytoplasm. Single strand-specific metallo-endoribonuclease involved in late-stage 70S ribosome quality control and in maturation of the 3' terminus of the 16S rRNA. This is Endoribonuclease YbeY from Legionella pneumophila (strain Paris).